The chain runs to 418 residues: Gamma-glutamyl phosphate reductase (418 aa).

The span at 1 to 18 shows a compositional bias: basic and acidic residues; that stretch reads MAIQDEMRQVAEGAREAS. A disordered region spans residues 1–22; that stretch reads MAIQDEMRQVAEGAREASRTLS.

This sequence belongs to the gamma-glutamyl phosphate reductase family.

It localises to the cytoplasm. It carries out the reaction L-glutamate 5-semialdehyde + phosphate + NADP(+) = L-glutamyl 5-phosphate + NADPH + H(+). The protein operates within amino-acid biosynthesis; L-proline biosynthesis; L-glutamate 5-semialdehyde from L-glutamate: step 2/2. In terms of biological role, catalyzes the NADPH-dependent reduction of L-glutamate 5-phosphate into L-glutamate 5-semialdehyde and phosphate. The product spontaneously undergoes cyclization to form 1-pyrroline-5-carboxylate. This Syntrophus aciditrophicus (strain SB) protein is Gamma-glutamyl phosphate reductase.